Reading from the N-terminus, the 501-residue chain is Actin-binding protein WASF3 (501 aa).

The stretch at 57-93 (NEANNFYIRANSLQDRIDRLAVKVTQLDSTVEEVSLQ) forms a coiled coil. Position 151 is a phosphotyrosine; by ABL1 (Tyr151). Residues 162–206 (KEKMLQDTEDKRKEKRRQKEQKRVDGTTREVKKVRKARNRRQEWN) adopt a coiled-coil conformation. A disordered region spans residues 170–443 (EDKRKEKRRQ…PPISDARSDL (274 aa)). Residues 182–192 (QKRVDGTTREV) show a composition bias toward basic and acidic residues. A compositionally biased stretch (polar residues) spans 219 to 237 (RLSQSVHHGASSEGSLSPD). Phosphotyrosine; by ABL1 is present on Tyr248. Over residues 256–267 (HALQAQPATPSY) the composition is skewed to polar residues. A compositionally biased stretch (pro residues) spans 302–312 (QQPPPPPPPQA). Tyr337 is modified (phosphotyrosine; by ABL1). 2 stretches are compositionally biased toward pro residues: residues 341–352 (SGPPPPPPPPMI) and 394–410 (APPP…PPGP). Residues 411–422 (SSLSSSPMHGPP) are compositionally biased toward low complexity. Residues 439–456 (ARSDLLAAIRMGIQLKKV) enclose the WH2 domain. A Phosphotyrosine; by ABL1 modification is found at Tyr485.

It belongs to the SCAR/WAVE family. Binds actin and the Arp2/3 complex. Post-translationally, phosphorylation by ABL1 promotes lamellipodia formation and cell migration.

Its subcellular location is the cytoplasm. The protein resides in the cytoskeleton. In terms of biological role, downstream effector molecules involved in the transmission of signals from tyrosine kinase receptors and small GTPases to the actin cytoskeleton. Plays a role in the regulation of cell morphology and cytoskeletal organization. Required in the control of cell shape. The chain is Actin-binding protein WASF3 (Wasf3) from Mus musculus (Mouse).